The primary structure comprises 205 residues: N-(5'-phosphoribosyl)anthranilate isomerase (205 aa).

The protein belongs to the TrpF family.

It carries out the reaction N-(5-phospho-beta-D-ribosyl)anthranilate = 1-(2-carboxyphenylamino)-1-deoxy-D-ribulose 5-phosphate. Its pathway is amino-acid biosynthesis; L-tryptophan biosynthesis; L-tryptophan from chorismate: step 3/5. The polypeptide is N-(5'-phosphoribosyl)anthranilate isomerase (Thermotoga petrophila (strain ATCC BAA-488 / DSM 13995 / JCM 10881 / RKU-1)).